The primary structure comprises 1073 residues: ATP-dependent helicase/deoxyribonuclease subunit B (1073 aa).

This sequence belongs to the helicase family. AddB/RexB type 2 subfamily. In terms of assembly, heterodimer of AddA and RexB. Mg(2+) serves as cofactor.

The heterodimer acts as both an ATP-dependent DNA helicase and an ATP-dependent, dual-direction single-stranded exonuclease. Recognizes the chi site generating a DNA molecule suitable for the initiation of homologous recombination. This subunit has 5' -&gt; 3' nuclease activity but not helicase activity. The protein is ATP-dependent helicase/deoxyribonuclease subunit B of Streptococcus equi subsp. zooepidemicus (strain H70).